A 705-amino-acid polypeptide reads, in one-letter code: uncharacterized protein (705 aa).

Active-site charge relay system residues include Ser-554 and His-676.

The protein belongs to the peptidase S9A family.

This is an uncharacterized protein from Sinorhizobium fredii (strain NBRC 101917 / NGR234).